Reading from the N-terminus, the 263-residue chain is Phosphatidylglycerol--prolipoprotein diacylglyceryl transferase (263 aa).

Transmembrane regions (helical) follow at residues 6–26 (VIFSIGPVSIYWYSLAYVLGI), 50–70 (LLTAVIIGIILGGRLGYVLIY), 85–105 (TWEGGMSFHGGAIGVLLAVII), and 112–132 (IPIFYTLDLISCGVPIGLLLG). An a 1,2-diacyl-sn-glycero-3-phospho-(1'-sn-glycerol)-binding site is contributed by Arg133. 3 consecutive transmembrane segments (helical) span residues 169 to 189 (LYEAFFEGALLFVVVNSLFYL), 197 to 217 (GATTGVAVMLYGVARFMVEFF), and 233 to 253 (MGQLLSIPMILLGMLIYLGAL).

Belongs to the Lgt family.

It is found in the cell membrane. It catalyses the reaction L-cysteinyl-[prolipoprotein] + a 1,2-diacyl-sn-glycero-3-phospho-(1'-sn-glycerol) = an S-1,2-diacyl-sn-glyceryl-L-cysteinyl-[prolipoprotein] + sn-glycerol 1-phosphate + H(+). It participates in protein modification; lipoprotein biosynthesis (diacylglyceryl transfer). Functionally, catalyzes the transfer of the diacylglyceryl group from phosphatidylglycerol to the sulfhydryl group of the N-terminal cysteine of a prolipoprotein, the first step in the formation of mature lipoproteins. This chain is Phosphatidylglycerol--prolipoprotein diacylglyceryl transferase, found in Wolbachia pipientis subsp. Culex pipiens (strain wPip).